Consider the following 325-residue polypeptide: Aldo-keto reductase family 1 member A1 (325 aa).

An N-acetylalanine modification is found at Ala-2. Ser-4 is subject to Phosphoserine. Residues 11-20 (GQKMPLIGLG), Thr-21, and Trp-22 contribute to the NADP(+) site. Position 38 is a phosphoserine (Ser-38). Residue Asp-45 participates in NADP(+) binding. The active-site Proton donor is Tyr-50. Lys-127 bears the N6-acetyllysine; alternate mark. At Lys-127 the chain carries N6-succinyllysine; alternate. At Lys-145 the chain carries N6-succinyllysine. NADP(+)-binding residues include Ser-162, Asn-163, Ser-211, Leu-213, Ser-215, Ser-216, Lys-263, Ser-264, Ile-265, Thr-266, Arg-269, Gln-272, and Asn-273. Residue Ser-211 is modified to Phosphoserine.

Belongs to the aldo/keto reductase family.

It is found in the cytoplasm. The protein localises to the cytosol. The protein resides in the apical cell membrane. It carries out the reaction a primary alcohol + NADP(+) = an aldehyde + NADPH + H(+). The enzyme catalyses L-gulonate + NADP(+) = aldehydo-D-glucuronate + NADPH + H(+). It catalyses the reaction L-gulono-1,4-lactone + NADP(+) = D-glucurono-3,6-lactone + NADPH + H(+). The catalysed reaction is allyl alcohol + NADP(+) = acrolein + NADPH + H(+). It carries out the reaction glycerol + NADP(+) = D-glyceraldehyde + NADPH + H(+). The enzyme catalyses glycerol + NADP(+) = L-glyceraldehyde + NADPH + H(+). It catalyses the reaction hydroxyacetone + NADP(+) = methylglyoxal + NADPH + H(+). The catalysed reaction is 3-deoxyfructose + NADP(+) = 3-deoxyglucosone + NADPH + H(+). It carries out the reaction (R)-mevalonate + NADP(+) = (R)-mevaldate + NADPH + H(+). The enzyme catalyses pyridine 3-methanol + NADP(+) = pyridine-3-carbaldehyde + NADPH + H(+). It catalyses the reaction S-nitroso-CoA + NADPH + H(+) = sulfinamide-CoA + NADP(+). The catalysed reaction is S-nitrosoglutathione + NADPH + H(+) = S-(hydroxysulfenamide)glutathione + NADP(+). Catalyzes the NADPH-dependent reduction of a wide variety of carbonyl-containing compounds to their corresponding alcohols. Displays enzymatic activity towards endogenous metabolites such as aromatic and aliphatic aldehydes, ketones, monosaccharides and bile acids, with a preference for negatively charged substrates, such as glucuronate and succinic semialdehyde. Functions as a detoxifiying enzyme by reducing a range of toxic aldehydes. Reduces methylglyoxal and 3-deoxyglucosone, which are present at elevated levels under hyperglycemic conditions and are cytotoxic. Involved also in the detoxification of lipid-derived aldehydes like acrolein. Plays a role in the activation of procarcinogens, such as polycyclic aromatic hydrocarbon trans-dihydrodiols, and in the metabolism of various xenobiotics and drugs. Also acts as an inhibitor of protein S-nitrosylation by mediating degradation of S-nitroso-coenzyme A (S-nitroso-CoA), a cofactor required to S-nitrosylate proteins. S-nitroso-CoA reductase activity is involved in reprogramming intermediary metabolism in renal proximal tubules, notably by inhibiting protein S-nitrosylation of isoform 2 of PKM (PKM2). Also acts as a S-nitroso-glutathione reductase by catalyzing the NADPH-dependent reduction of S-nitrosoglutathione. Displays no reductase activity towards retinoids. The polypeptide is Aldo-keto reductase family 1 member A1 (AKR1A1) (Pongo abelii (Sumatran orangutan)).